A 393-amino-acid polypeptide reads, in one-letter code: Protein TsgA (393 aa).

The Cytoplasmic segment spans residues 1 to 10 (MTNSNRIKLT). The chain crosses the membrane as a helical span at residues 11 to 31 (WISFLSYALTGALVIVTGMVM). Over 32-50 (GNIADYFHLPVSSMSNTFT) the chain is Periplasmic. A helical transmembrane segment spans residues 51-71 (FLNAGILISIFLNAWLMEIVP). Residues 72-77 (LKTQLR) lie on the Cytoplasmic side of the membrane. A helical membrane pass occupies residues 78–98 (FGFILMVLAVAGLMFSHSLAL). Topologically, residues 99–100 (FS) are periplasmic. Residues 101-121 (AAMFVLGLVSGITMSIGTFLI) form a helical membrane-spanning segment. At 122-133 (TQLYEGRQRGSR) the chain is on the cytoplasmic side. Residues 134–154 (LLFTDSFFSMAGMIFPMVAAF) traverse the membrane as a helical segment. The Periplasmic portion of the chain corresponds to 155–161 (LLARSIE). A helical transmembrane segment spans residues 162–182 (WYWVYACIGLVYLAIFILTFG). Residues 183-205 (CEFPALGKHAQHSQAPVVKEKWG) are Cytoplasmic-facing. A helical transmembrane segment spans residues 206–226 (IGVLFLAVAALCYILGQLGFI). Residues 227–244 (SWVPEYAKGLGMSLNDAG) are Periplasmic-facing. The chain crosses the membrane as a helical span at residues 245 to 265 (ALVSDFWMSYMFGMWAFSFIL). Over 266–272 (RFFDLQR) the chain is Cytoplasmic. Residues 273–293 (ILTVLAGMAAVLMYLFITGTQ) traverse the membrane as a helical segment. The Periplasmic segment spans residues 294–297 (AHMP). Residues 298 to 318 (WFILTLGFFSSAIYTSIITLG) traverse the membrane as a helical segment. The Cytoplasmic segment spans residues 319 to 331 (SQQTKVASPKLVN). A helical transmembrane segment spans residues 332–352 (FILTCGTIGTMLTFVVTGPIV). Topologically, residues 353–360 (AHSGPQAA) are periplasmic. Residues 361-381 (LLTANGLYAVVFVMCFALGFV) traverse the membrane as a helical segment. The Cytoplasmic portion of the chain corresponds to 382-393 (SRHRQHSSPAAH).

This sequence belongs to the major facilitator superfamily. TsgA family.

The protein localises to the cell inner membrane. The chain is Protein TsgA from Salmonella paratyphi A (strain ATCC 9150 / SARB42).